A 151-amino-acid chain; its full sequence is Large ribosomal subunit protein uL15 (151 aa).

A disordered region spans residues 1–62; sequence MVKLNELFPK…GGQMPLYRRV (62 aa). Over residues 11–20 the composition is skewed to basic residues; sequence HGSRKAKRRI.

Belongs to the universal ribosomal protein uL15 family. As to quaternary structure, part of the 50S ribosomal subunit.

Its function is as follows. Binds to the 23S rRNA. In Elusimicrobium minutum (strain Pei191), this protein is Large ribosomal subunit protein uL15.